Reading from the N-terminus, the 252-residue chain is Auxin-induced in root cultures protein 12 (252 aa).

An N-terminal signal peptide occupies residues 1 to 25 (MASSSSSLLILAVACFVSLISPAIS). The region spanning 49–165 (LNSYLHYTYN…DSVNQVWQIG (117 aa)) is the DOMON domain. N-linked (GlcNAc...) asparagine glycosylation is found at asparagine 58 and asparagine 61. Methionine 91 provides a ligand contact to heme. N-linked (GlcNAc...) asparagine glycans are attached at residues asparagine 114 and asparagine 167. Histidine 176 contributes to the heme binding site. The disordered stretch occupies residues 193–224 (EDAAPGSAPSPGSAPAPGTSGSTTPGTAAGGP). Residues 195 to 219 (AAPGSAPSPGSAPAPGTSGSTTPGT) are compositionally biased toward low complexity. Residue asparagine 226 is the site of GPI-anchor amidated asparagine attachment. Residues 227 to 252 (AGSLTRNVNFGVNLGILVLLGSIFIF) constitute a propeptide, removed in mature form.

Heme serves as cofactor.

It localises to the cell membrane. In terms of biological role, one-heme-containing cytochrome. The polypeptide is Auxin-induced in root cultures protein 12 (AIR12) (Arabidopsis thaliana (Mouse-ear cress)).